Here is a 272-residue protein sequence, read N- to C-terminus: Transcription factor GAL1 (272 aa).

A compositionally biased stretch (polar residues) spans 1 to 10 (MAGKNMSSRL). Disordered regions lie at residues 1-49 (MAGK…SPET), 102-215 (YGAI…SRDI), and 246-272 (KGHL…AMDY). Composition is skewed to acidic residues over residues 113 to 122 (ESDDDQDEEQ) and 152 to 174 (SEQD…DEAE). Over residues 175 to 215 (LLIKAERKEAAAKLRAERKAQRKADEVKSKQMAERRRSRDI) the composition is skewed to basic and acidic residues. The CCHC-type zinc finger occupies 240 to 255 (CHVCGQKGHLQKDCPD).

It is found in the nucleus. Its function is as follows. Transcription factor; part of the gene cluster that mediates the biosynthesis of liamocins, glycolipids (also called heavy oils) composed of a single mannitol or arabitol headgroup linked to either three, four or even six 3,5-dihydroxydecanoic ester tail-groups. Positively regulates the expression of PKS1 and EST1 that mediate the biosynthesis of liamocins. The polypeptide is Transcription factor GAL1 (Aureobasidium melanogenum (Aureobasidium pullulans var. melanogenum)).